The following is a 397-amino-acid chain: G2/mitotic-specific cyclin-B1 (397 aa).

Residues 1-17 show a composition bias toward polar residues; it reads MALRVTRNTRLASSENQ. Positions 1-30 are disordered; the sequence is MALRVTRNTRLASSENQGALPGKAAVANKP.

The protein belongs to the cyclin family. Cyclin AB subfamily. Interacts with the CDK1 protein kinase to form a serine/threonine kinase holoenzyme complex also known as maturation promoting factor (MPF). The cyclin subunit imparts substrate specificity to the complex.

Essential for the control of the cell cycle at the G2/M (mitosis) transition. The sequence is that of G2/mitotic-specific cyclin-B1 (ccnb1) from Carassius auratus (Goldfish).